The primary structure comprises 171 residues: Neuronal vesicle trafficking-associated protein 2 (171 aa).

Over residues 1 to 10 the composition is skewed to polar residues; it reads MVKLNSNPSE. Positions 1 to 21 are disordered; that stretch reads MVKLNSNPSEKGTKPPSVEDG. Residues 1–71 are Cytoplasmic-facing; that stretch reads MVKLNSNPSE…FRVPKIAEFT (71 aa). The helical; Signal-anchor for type II membrane protein transmembrane segment at 72–92 threads the bilayer; that stretch reads VTILVSLALAFLACIVFLVVY. The Lumenal portion of the chain corresponds to 93 to 171; it reads KAFTYDHSCP…EPKPPKTQGH (79 aa).

The protein belongs to the NSG family.

Its subcellular location is the membrane. The protein localises to the golgi apparatus. The protein resides in the trans-Golgi network membrane. It localises to the cell projection. It is found in the dendrite. Its subcellular location is the endosome membrane. The protein localises to the early endosome membrane. The protein resides in the late endosome membrane. It localises to the lysosome lumen. It is found in the cytoplasmic vesicle membrane. Its subcellular location is the golgi stack membrane. The protein localises to the endosome. The protein resides in the multivesicular body membrane. The chain is Neuronal vesicle trafficking-associated protein 2 from Homo sapiens (Human).